We begin with the raw amino-acid sequence, 399 residues long: Elongation factor Tu (399 aa).

The tr-type G domain occupies 10–209 (KPHVNIGTIG…EVDAYIPTPE (200 aa)). The interval 19-26 (GHVDHGKT) is G1. 19 to 26 (GHVDHGKT) is a binding site for GTP. Threonine 26 lines the Mg(2+) pocket. Positions 60-64 (GITIA) are G2. Residues 81-84 (DCPG) form a G3 region. Residues 81-85 (DCPGH) and 136-139 (NKQD) contribute to the GTP site. The G4 stretch occupies residues 136-139 (NKQD). Residues 174 to 176 (SAL) are G5.

Belongs to the TRAFAC class translation factor GTPase superfamily. Classic translation factor GTPase family. EF-Tu/EF-1A subfamily. Monomer.

It localises to the cytoplasm. The enzyme catalyses GTP + H2O = GDP + phosphate + H(+). In terms of biological role, GTP hydrolase that promotes the GTP-dependent binding of aminoacyl-tRNA to the A-site of ribosomes during protein biosynthesis. This chain is Elongation factor Tu, found in Helicobacter pylori (strain ATCC 700392 / 26695) (Campylobacter pylori).